Here is a 218-residue protein sequence, read N- to C-terminus: Ribonuclease HII (218 aa).

The RNase H type-2 domain maps to 22-211 (VRIAGVDEAG…VRAALESRFS (190 aa)). Residues aspartate 28, glutamate 29, and aspartate 119 each coordinate a divalent metal cation.

The protein belongs to the RNase HII family. Mn(2+) serves as cofactor. Requires Mg(2+) as cofactor.

It is found in the cytoplasm. The enzyme catalyses Endonucleolytic cleavage to 5'-phosphomonoester.. In terms of biological role, endonuclease that specifically degrades the RNA of RNA-DNA hybrids. This chain is Ribonuclease HII, found in Maricaulis maris (strain MCS10) (Caulobacter maris).